The following is a 349-amino-acid chain: tRNA pseudouridine synthase D (349 aa).

Residue F27 participates in substrate binding. D80 serves as the catalytic Nucleophile. N129 contributes to the substrate binding site. The region spanning 155-303 (GVPNYFGAQR…VEAARRAMLL (149 aa)) is the TRUD domain. Residue F329 participates in substrate binding.

Belongs to the pseudouridine synthase TruD family.

It catalyses the reaction uridine(13) in tRNA = pseudouridine(13) in tRNA. Functionally, responsible for synthesis of pseudouridine from uracil-13 in transfer RNAs. This is tRNA pseudouridine synthase D from Escherichia fergusonii (strain ATCC 35469 / DSM 13698 / CCUG 18766 / IAM 14443 / JCM 21226 / LMG 7866 / NBRC 102419 / NCTC 12128 / CDC 0568-73).